Reading from the N-terminus, the 337-residue chain is ELAV-like protein 1-A (337 aa).

3 consecutive RRM domains span residues 20 to 109, 117 to 197, and 255 to 333; these read TNLI…FARP, ANLY…FAAN, and WCIF…FKTS.

It belongs to the RRM elav family. As to quaternary structure, interacts (via RRM3) with cirbp. Unable to form oligomers. Part of a ribonucleoprotein (RNP) complex, at least composed of elavl1/elrA and/or elavl2/elrB, igf2bp3/vg1RBP, ddx6/Xp54, ybx2/frgy2, lsm14b/rap55b and, in a subset of RNP complexes, stau1/staufen. In terms of tissue distribution, ubiquitously expressed in adults.

Its subcellular location is the cytoplasm. The protein resides in the cell cortex. RNA-binding protein that binds to the 3'-UTR region of mRNAs and increases their stability. Involved in embryonic stem cells (ESCs) differentiation: preferentially binds mRNAs that are not methylated by N6-methyladenosine (m6A), stabilizing them, promoting ESCs differentiation. Binds to poly-U elements and AU-rich elements (AREs) in the 3'-UTR of target mRNAs. May be involved in cytoplasmic mRNA polyadenylation. Acts cooperatively with cribp to stabilize AU-rich sequence (ARE)-containing mRNAs. May play a role during gastrulation. Required for the vegetal localization of vg1 mRNA. The chain is ELAV-like protein 1-A (elavl1-a) from Xenopus laevis (African clawed frog).